We begin with the raw amino-acid sequence, 328 residues long: L-lactate dehydrogenase (328 aa).

Residues Val18, Glu39, Lys46, Tyr71, and 85–86 (GA) each bind NAD(+). Residues Gln88 and Arg94 each contribute to the substrate site. NAD(+) contacts are provided by residues Ser107, 124–126 (AAN), and Ser149. 126-129 (NPVD) is a substrate binding site. 154–157 (DSAR) lines the substrate pocket. Positions 159 and 174 each coordinate beta-D-fructose 1,6-bisphosphate. His181 serves as the catalytic Proton acceptor. Phosphotyrosine is present on Tyr226. Thr235 serves as a coordination point for substrate.

It belongs to the LDH/MDH superfamily. LDH family. In terms of assembly, homotetramer.

It is found in the cytoplasm. The catalysed reaction is (S)-lactate + NAD(+) = pyruvate + NADH + H(+). It participates in fermentation; pyruvate fermentation to lactate; (S)-lactate from pyruvate: step 1/1. With respect to regulation, allosterically activated by fructose 1,6-bisphosphate (FBP). In terms of biological role, catalyzes the conversion of lactate to pyruvate. The sequence is that of L-lactate dehydrogenase from Streptococcus gordonii (strain Challis / ATCC 35105 / BCRC 15272 / CH1 / DL1 / V288).